The chain runs to 283 residues: MKQYLELCRRIVSEGEWVANERTGKRCLTVINADLEYDVANNQFPLITTRKSYWKAAIAEFLGYIRGYDNAADFRALGTKTWDANANENAAWLANPHRRGVDDMGRVYGVQGRAWRKPNGETIDQLRKIVNNLTKGIDDRGEILTFFNPGEFDLGCLRPCMHTHTFSLVGDTLHLTSYQRSCDVPLGLNFNQIQVFTFLALMAQITGKKAGKAYHKIVNAHIYEDQLELMRDVQLKREPFPLPKLEINPDIKTLEDLETWVTMDDFKVVGYQSHEPIKYPFSV.

Arginine 22 provides a ligand contact to dUMP. Cysteine 160 (nucleophile) is an active-site residue. Residues 180-183, asparagine 191, and 221-223 contribute to the dUMP site; these read RSCD and HIY. Position 183 (aspartate 183) interacts with (6R)-5,10-methylene-5,6,7,8-tetrahydrofolate. Serine 282 lines the (6R)-5,10-methylene-5,6,7,8-tetrahydrofolate pocket.

Belongs to the thymidylate synthase family. Bacterial-type ThyA subfamily. As to quaternary structure, homodimer.

Its subcellular location is the cytoplasm. It catalyses the reaction dUMP + (6R)-5,10-methylene-5,6,7,8-tetrahydrofolate = 7,8-dihydrofolate + dTMP. The protein operates within pyrimidine metabolism; dTTP biosynthesis. In terms of biological role, catalyzes the reductive methylation of 2'-deoxyuridine-5'-monophosphate (dUMP) to 2'-deoxythymidine-5'-monophosphate (dTMP) while utilizing 5,10-methylenetetrahydrofolate (mTHF) as the methyl donor and reductant in the reaction, yielding dihydrofolate (DHF) as a by-product. This enzymatic reaction provides an intracellular de novo source of dTMP, an essential precursor for DNA biosynthesis. This chain is Thymidylate synthase, found in Haemophilus influenzae (strain PittEE).